A 174-amino-acid chain; its full sequence is Co-chaperone protein HscB homolog (174 aa).

A J domain is found at 2-74; that stretch reads NYFELFKFPP…IRRAEHMLSL (73 aa).

Belongs to the HscB family. Interacts with HscA and stimulates its ATPase activity.

Co-chaperone involved in the maturation of iron-sulfur cluster-containing proteins. Seems to help targeting proteins to be folded toward HscA. The protein is Co-chaperone protein HscB homolog of Shewanella oneidensis (strain ATCC 700550 / JCM 31522 / CIP 106686 / LMG 19005 / NCIMB 14063 / MR-1).